Here is a 336-residue protein sequence, read N- to C-terminus: Ketol-acid reductoisomerase (NADP(+)) (336 aa).

The KARI N-terminal Rossmann domain maps to 3–183 (AKMYYDRDVD…GCTKAGVLET (181 aa)). Residues 26–29 (YGSQ), Arg-49, Ser-52, Ser-54, and 84–87 (DEQQ) each bind NADP(+). His-109 is an active-site residue. Gly-135 contacts NADP(+). In terms of domain architecture, KARI C-terminal knotted spans 184-329 (TFKEETETDL…KELRDQMPFI (146 aa)). Mg(2+)-binding residues include Asp-192, Glu-196, Glu-228, and Glu-232. Ser-253 is a binding site for substrate.

The protein belongs to the ketol-acid reductoisomerase family. Mg(2+) serves as cofactor.

The catalysed reaction is (2R)-2,3-dihydroxy-3-methylbutanoate + NADP(+) = (2S)-2-acetolactate + NADPH + H(+). It carries out the reaction (2R,3R)-2,3-dihydroxy-3-methylpentanoate + NADP(+) = (S)-2-ethyl-2-hydroxy-3-oxobutanoate + NADPH + H(+). It functions in the pathway amino-acid biosynthesis; L-isoleucine biosynthesis; L-isoleucine from 2-oxobutanoate: step 2/4. It participates in amino-acid biosynthesis; L-valine biosynthesis; L-valine from pyruvate: step 2/4. Functionally, involved in the biosynthesis of branched-chain amino acids (BCAA). Catalyzes an alkyl-migration followed by a ketol-acid reduction of (S)-2-acetolactate (S2AL) to yield (R)-2,3-dihydroxy-isovalerate. In the isomerase reaction, S2AL is rearranged via a Mg-dependent methyl migration to produce 3-hydroxy-3-methyl-2-ketobutyrate (HMKB). In the reductase reaction, this 2-ketoacid undergoes a metal-dependent reduction by NADPH to yield (R)-2,3-dihydroxy-isovalerate. The polypeptide is Ketol-acid reductoisomerase (NADP(+)) (Deinococcus radiodurans (strain ATCC 13939 / DSM 20539 / JCM 16871 / CCUG 27074 / LMG 4051 / NBRC 15346 / NCIMB 9279 / VKM B-1422 / R1)).